Here is a 140-residue protein sequence, read N- to C-terminus: ATP synthase epsilon chain (140 aa).

This sequence belongs to the ATPase epsilon chain family. In terms of assembly, F-type ATPases have 2 components, CF(1) - the catalytic core - and CF(0) - the membrane proton channel. CF(1) has five subunits: alpha(3), beta(3), gamma(1), delta(1), epsilon(1). CF(0) has three main subunits: a, b and c.

The protein resides in the cell inner membrane. Produces ATP from ADP in the presence of a proton gradient across the membrane. The polypeptide is ATP synthase epsilon chain (Xanthomonas axonopodis pv. citri (strain 306)).